The primary structure comprises 270 residues: Pre-mRNA-splicing factor CWC23 (270 aa).

A J domain is found at 12–84 (DLYRILHIHV…EHKKEYDIWY (73 aa)).

The protein belongs to the DnaJ family. In terms of assembly, associated with the spliceosome.

It is found in the cytoplasm. The protein localises to the nucleus. Involved in pre-mRNA splicing. May be involved in endoplasmic reticulum-associated protein degradation (ERAD) and required for growth at low and high temperatures. This Kluyveromyces lactis (strain ATCC 8585 / CBS 2359 / DSM 70799 / NBRC 1267 / NRRL Y-1140 / WM37) (Yeast) protein is Pre-mRNA-splicing factor CWC23 (CWC23).